The sequence spans 101 residues: MAKQSMKAREAKRAKLVTKFAEKRAALKVLISDVNASEEDRWNAVLKLQSLPRDSSASRQRNRCNQTGRPHGYLRKFGLSRIKVREACMKGEIPGLRKASW.

The protein belongs to the universal ribosomal protein uS14 family. As to quaternary structure, part of the 30S ribosomal subunit. Contacts proteins S3 and S10.

Functionally, binds 16S rRNA, required for the assembly of 30S particles and may also be responsible for determining the conformation of the 16S rRNA at the A site. This chain is Small ribosomal subunit protein uS14, found in Aliivibrio salmonicida (strain LFI1238) (Vibrio salmonicida (strain LFI1238)).